The primary structure comprises 225 residues: Ribonuclease 3 (225 aa).

Residues 5–127 enclose the RNase III domain; that stretch reads IDKLERKLGY…IIGAIYLDSD (123 aa). Glu-40 is a Mg(2+) binding site. The active site involves Asp-44. Residues Asp-113 and Glu-116 each coordinate Mg(2+). Glu-116 is an active-site residue. The DRBM domain maps to 154-224; that stretch reads DPKTRLQEFL…AETALEQLTN (71 aa).

The protein belongs to the ribonuclease III family. Homodimer. Mg(2+) is required as a cofactor.

It is found in the cytoplasm. The enzyme catalyses Endonucleolytic cleavage to 5'-phosphomonoester.. Digests double-stranded RNA. Involved in the processing of primary rRNA transcript to yield the immediate precursors to the large and small rRNAs (23S and 16S). Processes some mRNAs, and tRNAs when they are encoded in the rRNA operon. Processes pre-crRNA and tracrRNA of type II CRISPR loci if present in the organism. The sequence is that of Ribonuclease 3 from Vibrio campbellii (strain ATCC BAA-1116).